Here is a 105-residue protein sequence, read N- to C-terminus: MRQIDRNFDIQPLQHADMTISLNGQPVTAALGETVLSVIQATGLRQVARNDHGQLVGAYCGMGVCHCCLVQIDGRHKRRACQTLVKPGMQVQTLSNRITETEPTL.

Residues Ala16 to Arg97 enclose the 2Fe-2S ferredoxin-type domain. The [2Fe-2S] cluster site is built by Cys60, Cys65, Cys68, and Cys81.

As to quaternary structure, heterotrimer of HcnA, HcnB and HcnC.

The protein localises to the cell membrane. The catalysed reaction is glycine + 2 A = hydrogen cyanide + 2 AH2 + CO2. A three-component membrane-bound flavoenzyme that catalyzes the formation of hydrogen cyanide, a secondary metabolite, by transfer of electrons to a cyanide-resistant branch of the aerobic respiratory chain. Contributes to suppression of black root rot of tobacco. The chain is Hydrogen cyanide synthase subunit HcnA from Pseudomonas protegens (strain DSM 19095 / LMG 27888 / CFBP 6595 / CHA0).